The sequence spans 407 residues: Mitochondrial protein import protein mas5 (407 aa).

The region spanning 6–68 (KLYEVLNVDV…EKRATYDRFG (63 aa)) is the J domain. Residues Leu-110 and 129-131 (LAL) contribute to the substrate site. The segment at 124–207 (GKTTKLALQK…CDGAKVISQR (84 aa)) adopts a CR-type zinc-finger fold. Positions 137, 140, 153, 156, 179, 182, 195, and 198 each coordinate Zn(2+). CXXCXGXG motif repeat units lie at residues 137–144 (CPKCSGRG), 153–160 (CASCNGSG), 179–186 (CPDCNGAG), and 195–202 (CKECDGAK). Substrate is bound by residues 209-210 (IL) and 241-243 (VIF). A disordered region spans residues 375–407 (VRIDNNVDPTTATSMDEDEDEEGGHPGVQCAQQ). At Cys-404 the chain carries Cysteine methyl ester. Cys-404 is lipidated: S-farnesyl cysteine. Positions 405 to 407 (AQQ) are cleaved as a propeptide — removed in mature form.

Homodimer.

It is found in the cytoplasm. The protein resides in the nucleus. Probably involved in mitochondrial protein import. Plays a role in microtubule cytoskeleton organization. The protein is Mitochondrial protein import protein mas5 (mas5) of Schizosaccharomyces pombe (strain 972 / ATCC 24843) (Fission yeast).